A 334-amino-acid chain; its full sequence is Serine racemase (334 aa).

Position 13 (Glu-13) interacts with Mg(2+). Ser-31, Ser-32, Ile-33, Lys-51, and Thr-52 together coordinate ATP. Catalysis depends on proton acceptor residues Lys-56 and Ser-84. Lys-56 carries the post-translational modification N6-(pyridoxal phosphate)lysine. Asn-86 lines the pyridoxal 5'-phosphate pocket. Gln-89 serves as a coordination point for ATP. Cys-113 bears the S-nitrosocysteine mark. Tyr-121 contributes to the ATP binding site. Residue Asn-154 participates in pyridoxal 5'-phosphate binding. Asp-178 is a binding site for Mg(2+). Pyridoxal 5'-phosphate-binding residues include Gly-185, Gly-186, Gly-187, Gly-188, and Met-189. Residues Glu-210, Ala-214, Asp-216, and Asn-247 each coordinate Mg(2+). 4 residues coordinate Ca(2+): Glu-210, Ala-214, Asp-216, and Asn-247. Glu-210, Ala-214, and Asp-216 together coordinate Mn(2+). Lys-279 provides a ligand contact to ATP. A pyridoxal 5'-phosphate-binding site is contributed by Ser-313. Position 316 (Asn-316) interacts with ATP.

Belongs to the serine/threonine dehydratase family. As to quaternary structure, homodimer. Mg(2+) serves as cofactor. Requires Mn(2+) as cofactor. Ca(2+) is required as a cofactor. It depends on pyridoxal 5'-phosphate as a cofactor. S-nitrosylated, leading to decrease the enzyme activity.

The enzyme catalyses L-serine = D-serine. It catalyses the reaction L-serine = pyruvate + NH4(+). It carries out the reaction D-serine = pyruvate + NH4(+). Functionally, catalyzes the synthesis of D-serine from L-serine. D-serine is a key coagonist with glutamate at NMDA receptors. Has dehydratase activity towards both L-serine and D-serine. The protein is Serine racemase (SRR) of Bos taurus (Bovine).